The primary structure comprises 140 residues: ATP synthase epsilon chain (140 aa).

This sequence belongs to the ATPase epsilon chain family. F-type ATPases have 2 components, CF(1) - the catalytic core - and CF(0) - the membrane proton channel. CF(1) has five subunits: alpha(3), beta(3), gamma(1), delta(1), epsilon(1). CF(0) has three main subunits: a, b and c.

Its subcellular location is the cell inner membrane. Produces ATP from ADP in the presence of a proton gradient across the membrane. This Legionella pneumophila (strain Lens) protein is ATP synthase epsilon chain.